The following is a 397-amino-acid chain: Acetate kinase (397 aa).

Residue N8 coordinates Mg(2+). K15 is an ATP binding site. Residue R92 coordinates substrate. Catalysis depends on D149, which acts as the Proton donor/acceptor. ATP contacts are provided by residues 209-213, 283-285, and 331-335; these read HLGNG, DFR, and GVGEN. E385 contacts Mg(2+).

It belongs to the acetokinase family. As to quaternary structure, homodimer. It depends on Mg(2+) as a cofactor. Requires Mn(2+) as cofactor.

The protein resides in the cytoplasm. It catalyses the reaction acetate + ATP = acetyl phosphate + ADP. The protein operates within metabolic intermediate biosynthesis; acetyl-CoA biosynthesis; acetyl-CoA from acetate: step 1/2. Its function is as follows. Catalyzes the formation of acetyl phosphate from acetate and ATP. Can also catalyze the reverse reaction. The sequence is that of Acetate kinase from Corynebacterium glutamicum (strain ATCC 13032 / DSM 20300 / JCM 1318 / BCRC 11384 / CCUG 27702 / LMG 3730 / NBRC 12168 / NCIMB 10025 / NRRL B-2784 / 534).